A 250-amino-acid chain; its full sequence is Uracil-DNA glycosylase (250 aa).

Asp78 functions as the Proton acceptor in the catalytic mechanism. The disordered stretch occupies residues 228 to 250; it reads RGQKPVDWSGEQNNASRQGEFAL.

The protein belongs to the uracil-DNA glycosylase (UDG) superfamily. UNG family.

It is found in the cytoplasm. The catalysed reaction is Hydrolyzes single-stranded DNA or mismatched double-stranded DNA and polynucleotides, releasing free uracil.. Excises uracil residues from the DNA which can arise as a result of misincorporation of dUMP residues by DNA polymerase or due to deamination of cytosine. The polypeptide is Uracil-DNA glycosylase (Bordetella pertussis (strain Tohama I / ATCC BAA-589 / NCTC 13251)).